A 162-amino-acid polypeptide reads, in one-letter code: Phospholipase A and acyltransferase 3 (162 aa).

The Cytoplasmic portion of the chain corresponds to methionine 1–valine 133. Residues leucine 13–glutamine 129 form the LRAT domain. Catalysis depends on residues histidine 23 and histidine 35. Cysteine 113 (acyl-thioester intermediate) is an active-site residue. A helical membrane pass occupies residues isoleucine 134–phenylalanine 154. Over serine 155–glutamine 162 the chain is Lumenal.

Belongs to the H-rev107 family. As to quaternary structure, interacts with PPP2R1A; this interaction might decrease PP2A activity.

Its subcellular location is the cell membrane. The protein resides in the cytoplasm. It is found in the cytosol. The protein localises to the perinuclear region. It localises to the peroxisome membrane. Its subcellular location is the mitochondrion membrane. The protein resides in the nucleus envelope. It is found in the lysosome membrane. The protein localises to the endoplasmic reticulum membrane. The catalysed reaction is a 1,2-diacyl-sn-glycero-3-phosphocholine + H2O = a 1-acyl-sn-glycero-3-phosphocholine + a fatty acid + H(+). It catalyses the reaction a 1,2-diacyl-sn-glycero-3-phosphocholine + H2O = a 2-acyl-sn-glycero-3-phosphocholine + a fatty acid + H(+). The enzyme catalyses 1,2-dihexadecanoyl-sn-glycero-3-phosphocholine + H2O = 1-hexadecanoyl-sn-glycero-3-phosphocholine + hexadecanoate + H(+). It carries out the reaction 1,2-dihexadecanoyl-sn-glycero-3-phosphocholine + H2O = 2-hexadecanoyl-sn-glycero-3-phosphocholine + hexadecanoate + H(+). The catalysed reaction is 1-hexadecanoyl-2-(9Z-octadecenoyl)-sn-glycero-3-phosphocholine + H2O = 2-(9Z-octadecenoyl)-sn-glycero-3-phosphocholine + hexadecanoate + H(+). It catalyses the reaction 1-hexadecanoyl-2-(9Z-octadecenoyl)-sn-glycero-3-phosphocholine + H2O = 1-hexadecanoyl-sn-glycero-3-phosphocholine + (9Z)-octadecenoate + H(+). The enzyme catalyses 1-hexadecanoyl-2-(5Z,8Z,11Z,14Z-eicosatetraenoyl)-sn-glycero-3-phosphocholine + H2O = 1-hexadecanoyl-sn-glycero-3-phosphocholine + (5Z,8Z,11Z,14Z)-eicosatetraenoate + H(+). It carries out the reaction 1-hexadecanoyl-2-(5Z,8Z,11Z,14Z-eicosatetraenoyl)-sn-glycero-3-phosphocholine + H2O = 2-(5Z,8Z,11Z,14Z)-eicosatetraenoyl-sn-glycero-3-phosphocholine + hexadecanoate + H(+). The catalysed reaction is 1-hexadecanoyl-2-(9Z,12Z-octadecadienoyl)-sn-glycero-3-phosphoethanolamine + H2O = 1-hexadecanoyl-sn-glycero-3-phosphoethanolamine + (9Z,12Z)-octadecadienoate + H(+). It catalyses the reaction 1-hexadecanoyl-2-(9Z,12Z-octadecadienoyl)-sn-glycero-3-phosphoethanolamine + H2O = 2-(9Z,12Z)-octadecadienoyl-sn-glycero-3-phosphoethanolamine + hexadecanoate + H(+). The enzyme catalyses 1-hexadecanoyl-2-(5Z,8Z,11Z,14Z-eicosatetraenoyl)-sn-glycero-3-phosphoethanolamine + H2O = 1-hexadecanoyl-sn-glycero-3-phosphoethanolamine + (5Z,8Z,11Z,14Z)-eicosatetraenoate + H(+). It carries out the reaction 1-hexadecanoyl-2-(5Z,8Z,11Z,14Z-eicosatetraenoyl)-sn-glycero-3-phosphoethanolamine + H2O = 2-(5Z,8Z,11Z,14Z)-eicosatetraenoyl-sn-glycero-3-phosphoethanolamine + hexadecanoate + H(+). The catalysed reaction is 1-hexanoyl-2-acyl-sn-glycero-3-phosphocholine + H2O = hexanoate + a 2-acyl-sn-glycero-3-phosphocholine + H(+). It catalyses the reaction 1-hexanoyl-2-acyl-sn-glycero-3-phosphocholine + H2O = 1-hexanoyl-sn-glycero-3-phosphocholine + a fatty acid + H(+). The enzyme catalyses 1,2-diheptadecanoyl-sn-glycero-3-phosphoethanolamine + 1-(9Z-octadecenoyl)-2-hexadecanoyl-sn-glycero-3-phosphocholine = 1,2-diheptadecanoyl-sn-glycero-3-phospho-N-hexadecanoyl-ethanolamine + 1-(9Z-octadecenoyl)-sn-glycero-3-phosphocholine + H(+). It carries out the reaction 1,2-diheptadecanoyl-sn-glycero-3-phosphoethanolamine + 1-(9Z-octadecenoyl)-2-hexadecanoyl-sn-glycero-3-phosphocholine = 1,2-diheptadecanoyl-sn-glycero-3-phospho-N-(9Z-octadecenoyl)-ethanolamine + 2-hexadecanoyl-sn-glycero-3-phosphocholine + H(+). The catalysed reaction is 1,2-dihexanoyl-sn-glycero-3-phosphoethanolamine + 2-heptanoyl-sn-glycero-3-phosphocholine = hexanoyl-sn-glycero-3-phosphoethanolamine + 1-hexanoyl-2-heptanoyl-sn-glycero-3-phosphocholine. It catalyses the reaction 1-hexadecanoyl-2-octadecanoyl-sn-glycero-3-phosphocholine + H2O = octadecanoate + 1-hexadecanoyl-sn-glycero-3-phosphocholine + H(+). The enzyme catalyses 1-hexadecanoyl-2-octadecanoyl-sn-glycero-3-phosphocholine + H2O = 2-octadecanoyl-sn-glycero-3-phosphocholine + hexadecanoate + H(+). It carries out the reaction 1-octadecanoyl-2-hexadecanoyl-sn-glycero-3-phosphocholine + H2O = 1-octadecanoyl-sn-glycero-3-phosphocholine + hexadecanoate + H(+). The catalysed reaction is 1-octadecanoyl-2-hexadecanoyl-sn-glycero-3-phosphocholine + H2O = 2-hexadecanoyl-sn-glycero-3-phosphocholine + octadecanoate + H(+). It catalyses the reaction 1-hexadecanoyl-2-(9Z,12Z-octadecadienoyl)-sn-glycero-3-phosphocholine + H2O = (9Z,12Z)-octadecadienoate + 1-hexadecanoyl-sn-glycero-3-phosphocholine + H(+). The enzyme catalyses 1-hexadecanoyl-2-(9Z,12Z-octadecadienoyl)-sn-glycero-3-phosphocholine + H2O = 2-(9Z,12Z-octadecadienoyl)-sn-glycero-3-phosphocholine + hexadecanoate + H(+). It carries out the reaction 1,2-di-(9Z-octadecenoyl)-sn-glycero-3-phosphocholine + H2O = 2-(9Z-octadecenoyl)-sn-glycero-3-phosphocholine + (9Z)-octadecenoate + H(+). The catalysed reaction is 1,2-dihexadecanoyl-sn-glycero-3-phosphocholine + H2O = hexadecanoyl-sn-glycero-3-phosphocholine + hexadecanoate + H(+). It catalyses the reaction 1,2-di-(9Z-octadecenoyl)-sn-glycero-3-phosphocholine + H2O = 1-(9Z-octadecenoyl)-sn-glycero-3-phosphocholine + (9Z)-octadecenoate + H(+). The enzyme catalyses 1,2-di-(9Z-octadecenoyl)-sn-glycero-3-phosphoethanolamine + 1,2-dihexadecanoyl-sn-glycero-3-phosphocholine = hexadecanoyl-sn-glycero-3-phosphocholine + N-hexadecanoyl-1,2-di-(9Z-octadecenoyl)-sn-glycero-3-phosphoethanolamine + H(+). It carries out the reaction 1,2-di-(9Z,12Z-octadecadienoyl)-sn-glycero-3-phosphocholine + H2O = 1-(9Z,12Z)-octadecadienoyl-sn-glycero-3-phosphocholine + (9Z,12Z)-octadecadienoate + H(+). Functionally, exhibits both phospholipase A1/2 and acyltransferase activities. Shows phospholipase A1 (PLA1) and A2 (PLA2), catalyzing the calcium-independent release of fatty acids from the sn-1 or sn-2 position of glycerophospholipids. For most substrates, PLA1 activity is much higher than PLA2 activity. Shows O-acyltransferase activity, catalyzing the transfer of a fatty acyl group from glycerophospholipid to the hydroxyl group of lysophospholipid. Shows N-acyltransferase activity, catalyzing the calcium-independent transfer of a fatty acyl group at the sn-1 position of phosphatidylcholine (PC) and other glycerophospholipids to the primary amine of phosphatidylethanolamine (PE), forming N-acylphosphatidylethanolamine (NAPE), which serves as precursor for N-acylethanolamines (NAEs). Exhibits high N-acyltransferase activity and low phospholipase A1/2 activity. Required for complete organelle rupture and degradation that occur during eye lens terminal differentiation, when fiber cells that compose the lens degrade all membrane-bound organelles in order to provide lens with transparency to allow the passage of light. Organelle membrane degradation is probably catalyzed by the phospholipase activity. Plays a role in phospholipid metabolism and adipogenesis. The protein is Phospholipase A and acyltransferase 3 of Pongo abelii (Sumatran orangutan).